A 291-amino-acid polypeptide reads, in one-letter code: Ribose-phosphate pyrophosphokinase (291 aa).

Residues 34 to 36 (DGE) and 93 to 94 (RQ) each bind ATP. 2 residues coordinate Mg(2+): histidine 127 and aspartate 165. Residue lysine 188 is part of the active site. D-ribose 5-phosphate-binding positions include arginine 190, aspartate 216, and 220–224 (STGGT).

It belongs to the ribose-phosphate pyrophosphokinase family. Class III (archaeal) subfamily. It depends on Mg(2+) as a cofactor.

It localises to the cytoplasm. It carries out the reaction D-ribose 5-phosphate + ATP = 5-phospho-alpha-D-ribose 1-diphosphate + AMP + H(+). It participates in metabolic intermediate biosynthesis; 5-phospho-alpha-D-ribose 1-diphosphate biosynthesis; 5-phospho-alpha-D-ribose 1-diphosphate from D-ribose 5-phosphate (route I): step 1/1. Functionally, involved in the biosynthesis of the central metabolite phospho-alpha-D-ribosyl-1-pyrophosphate (PRPP) via the transfer of pyrophosphoryl group from ATP to 1-hydroxyl of ribose-5-phosphate (Rib-5-P). The protein is Ribose-phosphate pyrophosphokinase of Sulfurisphaera tokodaii (strain DSM 16993 / JCM 10545 / NBRC 100140 / 7) (Sulfolobus tokodaii).